Consider the following 40-residue polypeptide: uncharacterized protein (40 aa).

This is an uncharacterized protein from Saccharomyces cerevisiae (strain ATCC 204508 / S288c) (Baker's yeast).